A 466-amino-acid chain; its full sequence is Sucrose-6-phosphate hydrolase (466 aa).

Substrate-binding positions include 38-41, glutamine 57, 100-101, 159-160, and glutamate 218; these read LLND, YS, and RD. Aspartate 41 is an active-site residue.

The protein resides in the cytoplasm. The catalysed reaction is Hydrolysis of terminal non-reducing beta-D-fructofuranoside residues in beta-D-fructofuranosides.. It participates in glycan biosynthesis; sucrose metabolism. Hydrolyzes sucrose and sucrose-6P, but fails to hydrolyze any of the phosphorylated isomers of sucrose and other phospho-D-glucosides, including maltose-6'P and trehalose-6P. The sequence is that of Sucrose-6-phosphate hydrolase (scrB) from Klebsiella pneumoniae.